A 303-amino-acid polypeptide reads, in one-letter code: Lipase chaperone (303 aa).

A helical transmembrane segment spans residues 7–23 (TLAAACAAWLAWWAWPD).

Belongs to the lipase chaperone family.

Its subcellular location is the cell inner membrane. Its function is as follows. May be involved in the folding of the extracellular lipase during its passage through the periplasm. The protein is Lipase chaperone (lifO) of Chromobacterium violaceum (strain ATCC 12472 / DSM 30191 / JCM 1249 / CCUG 213 / NBRC 12614 / NCIMB 9131 / NCTC 9757 / MK).